Here is a 246-residue protein sequence, read N- to C-terminus: UDP-N-acetyl-D-mannosaminuronic acid transferase (246 aa).

This sequence belongs to the glycosyltransferase 26 family.

It catalyses the reaction UDP-N-acetyl-alpha-D-mannosaminouronate + N-acetyl-alpha-D-glucosaminyl-di-trans,octa-cis-undecaprenyl diphosphate = beta-D-ManNAcA-(1-&gt;4)-alpha-D-GlcNAc-di-trans,octa-cis-undecaprenyl diphosphate + UDP + H(+). It functions in the pathway bacterial outer membrane biogenesis; enterobacterial common antigen biosynthesis. Catalyzes the synthesis of Und-PP-GlcNAc-ManNAcA (Lipid II), the second lipid-linked intermediate involved in enterobacterial common antigen (ECA) synthesis. The sequence is that of UDP-N-acetyl-D-mannosaminuronic acid transferase from Escherichia coli (strain 55989 / EAEC).